The sequence spans 101 residues: Protein Tat (101 aa).

Positions 1–24 (MEPVDPRLEPWKHPGSQPKTACTN) are interaction with human CREBBP. Residues 1–48 (MEPVDPRLEPWKHPGSQPKTACTNCYCKKCCFHCQVCFTKKALGISYG) are transactivation. Positions 22, 25, and 27 each coordinate Zn(2+). Residues 22–37 (CTNCYCKKCCFHCQVC) are cysteine-rich. Lys-28 carries the N6-acetyllysine; by host PCAF modification. Residues Cys-30, His-33, Cys-34, and Cys-37 each coordinate Zn(2+). The tract at residues 38 to 48 (FTKKALGISYG) is core. A disordered region spans residues 47-101 (YGRKKRRQRRRAHQDSQNHQASLSKQPSSQTRGDPTGPKEPKKEVEREAETDPLD). Residues 48–58 (GRKKRRQRRRA) are compositionally biased toward basic residues. Residues 49-57 (RKKRRQRRR) carry the Nuclear localization signal, RNA-binding (TAR), and protein transduction motif. The tract at residues 49–86 (RKKRRQRRRAHQDSQNHQASLSKQPSSQTRGDPTGPKE) is interaction with the host capping enzyme RNGTT. N6-acetyllysine; by host EP300 and GCN5L2 is present on residues Lys-50 and Lys-51. Residues Arg-52 and Arg-53 each carry the asymmetric dimethylarginine; by host PRMT6 modification. Residues 61-79 (DSQNHQASLSKQPSSQTRG) are compositionally biased toward polar residues. A Glycyl lysine isopeptide (Lys-Gly) (interchain with G-Cter in ubiquitin) cross-link involves residue Lys-71. Positions 78 to 80 (RGD) match the Cell attachment site motif. Positions 83-101 (GPKEPKKEVEREAETDPLD) are enriched in basic and acidic residues.

It belongs to the lentiviruses Tat family. Interacts with host CCNT1. Associates with the P-TEFb complex composed at least of Tat, P-TEFb (CDK9 and CCNT1), TAR RNA, RNA Pol II. Recruits the HATs CREBBP, TAF1/TFIID, EP300, PCAF and GCN5L2. Interacts with host KAT5/Tip60; this interaction targets the latter to degradation. Interacts with the host deacetylase SIRT1. Interacts with host capping enzyme RNGTT; this interaction stimulates RNGTT. Binds to host KDR, and to the host integrins ITGAV/ITGB3 and ITGA5/ITGB1. Interacts with host KPNB1/importin beta-1 without previous binding to KPNA1/importin alpha-1. Interacts with EIF2AK2. Interacts with host nucleosome assembly protein NAP1L1; this interaction may be required for the transport of Tat within the nucleus, since the two proteins interact at the nuclear rim. Interacts with host C1QBP/SF2P32; this interaction involves lysine-acetylated Tat. Interacts with the host chemokine receptors CCR2, CCR3 and CXCR4. Interacts with host DPP4/CD26; this interaction may trigger an anti-proliferative effect. Interacts with host LDLR. Interacts with the host extracellular matrix metalloproteinase MMP1. Interacts with host PRMT6; this interaction mediates Tat's methylation. Interacts with, and is ubiquitinated by MDM2/Hdm2. Interacts with host PSMC3 and HTATIP2. Interacts with STAB1; this interaction may overcome SATB1-mediated repression of IL2 and IL2RA (interleukin) in T cells by binding to the same domain than HDAC1. Interacts (when acetylated) with human CDK13, thereby increasing HIV-1 mRNA splicing and promoting the production of the doubly spliced HIV-1 protein Nef. Interacts with host TBP; this interaction modulates the activity of transcriptional pre-initiation complex. Interacts with host RELA. Interacts with host PLSCR1; this interaction negatively regulates Tat transactivation activity by altering its subcellular distribution. Post-translationally, asymmetrical arginine methylation by host PRMT6 seems to diminish the transactivation capacity of Tat and affects the interaction with host CCNT1. In terms of processing, acetylation by EP300, CREBBP, GCN5L2/GCN5 and PCAF regulates the transactivation activity of Tat. EP300-mediated acetylation of Lys-50 promotes dissociation of Tat from the TAR RNA through the competitive binding to PCAF's bromodomain. In addition, the non-acetylated Tat's N-terminus can also interact with PCAF. PCAF-mediated acetylation of Lys-28 enhances Tat's binding to CCNT1. Lys-50 is deacetylated by SIRT1. Polyubiquitination by host MDM2 does not target Tat to degradation, but activates its transactivation function and fosters interaction with CCNT1 and TAR RNA. Post-translationally, phosphorylated by EIF2AK2 on serine and threonine residues adjacent to the basic region important for TAR RNA binding and function. Phosphorylation of Tat by EIF2AK2 is dependent on the prior activation of EIF2AK2 by dsRNA.

Its subcellular location is the host nucleus. The protein resides in the host nucleolus. The protein localises to the host cytoplasm. It localises to the secreted. Its function is as follows. Transcriptional activator that increases RNA Pol II processivity, thereby increasing the level of full-length viral transcripts. Recognizes a hairpin structure at the 5'-LTR of the nascent viral mRNAs referred to as the transactivation responsive RNA element (TAR) and recruits the cyclin T1-CDK9 complex (P-TEFb complex) that will in turn hyperphosphorylate the RNA polymerase II to allow efficient elongation. The CDK9 component of P-TEFb and other Tat-activated kinases hyperphosphorylate the C-terminus of RNA Pol II that becomes stabilized and much more processive. Other factors such as HTATSF1/Tat-SF1, SUPT5H/SPT5, and HTATIP2 are also important for Tat's function. Besides its effect on RNA Pol II processivity, Tat induces chromatin remodeling of proviral genes by recruiting the histone acetyltransferases (HATs) CREBBP, EP300 and PCAF to the chromatin. This also contributes to the increase in proviral transcription rate, especially when the provirus integrates in transcriptionally silent region of the host genome. To ensure maximal activation of the LTR, Tat mediates nuclear translocation of NF-kappa-B by interacting with host RELA. Through its interaction with host TBP, Tat may also modulate transcription initiation. Tat can reactivate a latently infected cell by penetrating in it and transactivating its LTR promoter. In the cytoplasm, Tat is thought to act as a translational activator of HIV-1 mRNAs. In terms of biological role, extracellular circulating Tat can be endocytosed by surrounding uninfected cells via the binding to several surface receptors such as CD26, CXCR4, heparan sulfate proteoglycans (HSPG) or LDLR. Neurons are rarely infected, but they internalize Tat via their LDLR. Through its interaction with nuclear HATs, Tat is potentially able to control the acetylation-dependent cellular gene expression. Modulates the expression of many cellular genes involved in cell survival, proliferation or in coding for cytokines or cytokine receptors. Tat plays a role in T-cell and neurons apoptosis. Tat induced neurotoxicity and apoptosis probably contribute to neuroAIDS. Circulating Tat also acts as a chemokine-like and/or growth factor-like molecule that binds to specific receptors on the surface of the cells, affecting many cellular pathways. In the vascular system, Tat binds to ITGAV/ITGB3 and ITGA5/ITGB1 integrins dimers at the surface of endothelial cells and competes with bFGF for heparin-binding sites, leading to an excess of soluble bFGF. In Homo sapiens (Human), this protein is Protein Tat.